Here is a 405-residue protein sequence, read N- to C-terminus: Secreted aspartic protease 8 (405 aa).

Positions 1 to 23 (MVSIITFTKNVLVTLAFALLAQG) are cleaved as a signal peptide. Residues 24-75 (LAIPEDIDKRAEKVVSLDFTVTRKPFNATAHGQHHQSQQQQQQQQQQPAQKR) constitute a propeptide, activation peptide. Positions 52–78 (TAHGQHHQSQQQQQQQQQQPAQKRGTV) are disordered. Low complexity predominate over residues 58–70 (HQSQQQQQQQQQQ). One can recognise a Peptidase A1 domain in the interval 89 to 392 (YAATITVGSN…DLDGNTISLA (304 aa)). The active site involves aspartate 107. Residue 107–109 (DTG) coordinates pepstatin A. The cysteines at positions 122 and 134 are disulfide-linked. Residues 160 to 161 (ED) and 292 to 296 (DSGTT) each bind pepstatin A. The active site involves aspartate 292. A disulfide bond links cysteine 327 and cysteine 358.

Belongs to the peptidase A1 family. In terms of assembly, monomer.

It is found in the secreted. It catalyses the reaction Preferential cleavage at the carboxyl of hydrophobic amino acids, but fails to cleave 15-Leu-|-Tyr-16, 16-Tyr-|-Leu-17 and 24-Phe-|-Phe-25 of insulin B chain. Activates trypsinogen, and degrades keratin.. Secreted aspartic peptidases (SAPs) are a group of ten acidic hydrolases considered as key virulence factors. These enzymes supply the fungus with nutrient amino acids as well as are able to degrade the selected host's proteins involved in the immune defense. Moreover, acts toward human hemoglobin though limited proteolysis to generate a variety of antimicrobial hemocidins, enabling to compete with the other microorganisms of the same physiological niche using the microbicidal peptides generated from the host protein. Functionally, plays a key role in defense against host by cleaving histatin-5 (Hst 5), a peptide from human saliva that carries out fungicidal activity. The cleavage rate decreases in an order of SAP2 &gt; SAP9 &gt; SAP3 &gt; SAP7 &gt; SAP4 &gt; SAP1 &gt; SAP8. The hydrolysis of Hst 5 by SAP8 causes production of the DSHAKRHHGY, HHSHRGY and FHEKHHSHRGY peptides. The polypeptide is Secreted aspartic protease 8 (Candida albicans (strain SC5314 / ATCC MYA-2876) (Yeast)).